The primary structure comprises 202 residues: uncharacterized protein (202 aa).

Residues 175 to 195 (INTGIALFIILTSLLVYFIQF) form a helical membrane-spanning segment.

It localises to the membrane. This is an uncharacterized protein from Dictyostelium discoideum (Social amoeba).